The following is a 346-amino-acid chain: Haptoglobin-related protein (346 aa).

The segment at residues 1-16 (DLGAVIYLLLWGRQLF) is a signal peptide (not cleaved). A Sushi domain is found at 32–85 (FPKPPEIANGYVEHLFRYQRKNYYRLRTEGDGVYTLNDKKQWINKAVGDKLPEC). The 243-residue stretch at 102-344 (ILGGHLDAKG…IHVWVQKTIA (243 aa)) folds into the Peptidase S1 domain. 2 disulfide bridges follow: cysteine 249/cysteine 280 and cysteine 291/cysteine 321.

The protein belongs to the peptidase S1 family.

It localises to the secreted. Primate-specific plasma protein associated with apolipoprotein L-I (apoL-I)-containing high-density lipoprotein (HDL). Binds hemoglobin with high affinity and may contribute to the clearance of cell-free hemoglobin to allow hepatic recycling of heme iron. The chain is Haptoglobin-related protein (HPR) from Pan troglodytes (Chimpanzee).